The primary structure comprises 571 residues: La-related protein 7 (571 aa).

An N-acetylmethionine modification is found at methionine 1. Basic and acidic residues predominate over residues 1–17 (METENQKTMEESTEKRK). 2 disordered regions span residues 1-25 (METENQKTMEESTEKRKEEKKKRSR) and 181-366 (LNNP…ERHK). One can recognise an HTH La-type RNA-binding domain in the interval 23-117 (RSRVKQVLAD…KPLGERPKDE (95 aa)). The RRM domain maps to 120–198 (RTVYVELLPK…PRKPGIFPKT (79 aa)). A compositionally biased stretch (basic residues) spans 214-223 (KKKKKKKGRI). Residue lysine 232 forms a Glycyl lysine isopeptide (Lys-Gly) (interchain with G-Cter in SUMO2) linkage. A Phosphothreonine modification is found at threonine 252. Phosphoserine is present on residues serine 254 and serine 257. Phosphothreonine is present on threonine 261. Residues 287 to 296 (KAGKRERSSA) are compositionally biased toward basic and acidic residues. Phosphoserine occurs at positions 294, 295, and 335. Threonine 336 bears the Phosphothreonine mark. A compositionally biased stretch (basic and acidic residues) spans 342–351 (PGDRKGDSLS). Position 349 is a phosphoserine (serine 349). The span at 352-365 (KGKRKHKKKHKERH) shows a compositional bias: basic residues. Residue lysine 408 forms a Glycyl lysine isopeptide (Lys-Gly) (interchain with G-Cter in SUMO2) linkage. Positions 411–432 (SEMETESKAPPGSGQQCSTQEK) are disordered. A compositionally biased stretch (polar residues) spans 423–432 (SGQQCSTQEK). Residues 439–552 (QFVTGVIVKI…TEKLITKAEK (114 aa)) enclose the xRRM domain.

This sequence belongs to the LARP7 family. In terms of assembly, core component of the 7SK RNP complex, at least composed of 7SK RNA, LARP7, MEPCE, HEXIM1 (or HEXIM2) and P-TEFb (composed of CDK9 and CCNT1/cyclin-T1). Interacts with METTL16. Interacts with RBM7; upon genotoxic stress this interaction is enhanced, triggering the release of inactive P-TEFb complex from the core, yielding to P-TEFb complex activation. Associates with box C/D small nucleolar ribonucleoprotein (snoRNP) complexes.

It localises to the nucleus. The protein localises to the nucleoplasm. Its function is as follows. RNA-binding protein that specifically binds distinct small nuclear RNA (snRNAs) and regulates their processing and function. Specifically binds the 7SK snRNA (7SK RNA) and acts as a core component of the 7SK ribonucleoprotein (RNP) complex, thereby acting as a negative regulator of transcription elongation by RNA polymerase II. The 7SK RNP complex sequesters the positive transcription elongation factor b (P-TEFb) in a large inactive 7SK RNP complex preventing RNA polymerase II phosphorylation and subsequent transcriptional elongation. The 7SK RNP complex also promotes snRNA gene transcription by RNA polymerase II via interaction with the little elongation complex (LEC). LARP7 specifically binds to the highly conserved 3'-terminal U-rich stretch of 7SK RNA; on stimulation, remains associated with 7SK RNA, whereas P-TEFb is released from the complex. LARP7 also acts as a regulator of mRNA splicing fidelity by promoting U6 snRNA processing. Specifically binds U6 snRNAs and associates with a subset of box C/D RNP complexes: promotes U6 snRNA 2'-O-methylation by facilitating U6 snRNA loading into box C/D RNP complexes. U6 snRNA 2'-O-methylation is required for mRNA splicing fidelity. Binds U6 snRNAs with a 5'-CAGGG-3' sequence motif. U6 snRNA processing is required for spermatogenesis. The polypeptide is La-related protein 7 (Rattus norvegicus (Rat)).